The primary structure comprises 206 residues: Transcriptional regulator GfcR (206 aa).

The protein belongs to the purine/pyrimidine phosphoribosyltransferase family. GfcR subfamily.

This Methanosphaerula palustris (strain ATCC BAA-1556 / DSM 19958 / E1-9c) protein is Transcriptional regulator GfcR.